Reading from the N-terminus, the 861-residue chain is Leucine--tRNA ligase (861 aa).

Positions 42–52 (PYPSGKLHMGH) match the 'HIGH' region motif. A 'KMSKS' region motif is present at residues 620–624 (KMSKS). Lysine 623 is a binding site for ATP.

The protein belongs to the class-I aminoacyl-tRNA synthetase family.

It localises to the cytoplasm. It catalyses the reaction tRNA(Leu) + L-leucine + ATP = L-leucyl-tRNA(Leu) + AMP + diphosphate. The polypeptide is Leucine--tRNA ligase (Hahella chejuensis (strain KCTC 2396)).